The primary structure comprises 481 residues: PRAME family member 22 (481 aa).

An LRR 1; degenerate repeat occupies 99-126; sequence RWKLQVLELRDVDENFWTIWSGARPLSC. Residues 181-205 form an LRR 2; degenerate repeat; the sequence is HLCCTKVVNYSMSILNFRNILETVY. An LRR 3; degenerate repeat occupies 206 to 232; the sequence is PDSIQVLEIWNMCWPCMIVEFSRYLSQ. Residues 233–267 form an LRR 4; degenerate repeat; that stretch reads MRNLRKLFISDGCRYLLSSDSQEQLVAEFSSVLLR. LRR repeat units follow at residues 268-293, 294-325, 326-344, 350-377, and 378-402; these read LEYLQMLYVRRVCFFRGHLDQLIRCL, RSPLETLALTYGFLEKVDLKCLPRYPSLSQLK, QLNLSHGALRFIRLEPLRA, AATLQTLFLVDCGIRDSKLRVILPALSC, and CSNLTTFCFHGNDTSMDGLKDLLRH.

This sequence belongs to the PRAME family.

In Homo sapiens (Human), this protein is PRAME family member 22.